The sequence spans 200 residues: dITP/XTP pyrophosphatase (200 aa).

8 to 13 contributes to the substrate binding site; the sequence is THNPNK. Mg(2+) contacts are provided by Glu41 and Asp71. The Proton acceptor role is filled by Asp71. Residues Thr72, 153-156, Lys176, and 181-182 contribute to the substrate site; these read FGYD and HR.

Belongs to the HAM1 NTPase family. As to quaternary structure, homodimer. Mg(2+) serves as cofactor.

It carries out the reaction XTP + H2O = XMP + diphosphate + H(+). It catalyses the reaction dITP + H2O = dIMP + diphosphate + H(+). The catalysed reaction is ITP + H2O = IMP + diphosphate + H(+). In terms of biological role, pyrophosphatase that catalyzes the hydrolysis of nucleoside triphosphates to their monophosphate derivatives, with a high preference for the non-canonical purine nucleotides XTP (xanthosine triphosphate), dITP (deoxyinosine triphosphate) and ITP. Seems to function as a house-cleaning enzyme that removes non-canonical purine nucleotides from the nucleotide pool, thus preventing their incorporation into DNA/RNA and avoiding chromosomal lesions. In Caldanaerobacter subterraneus subsp. tengcongensis (strain DSM 15242 / JCM 11007 / NBRC 100824 / MB4) (Thermoanaerobacter tengcongensis), this protein is dITP/XTP pyrophosphatase.